The following is a 109-amino-acid chain: MKKNTHPEYRQVLFVDSSTGYKFVCGSTYQSEKTEVFEGKEYPVCYVSVSSSSHPFFTGSKKFVDAEGRVDKFLKRYSNVRQPAQQPQPEEDALPAAKGKKKVVTKKKK.

The segment at 79–109 is disordered; sequence NVRQPAQQPQPEEDALPAAKGKKKVVTKKKK. Residues 98 to 109 show a composition bias toward basic residues; that stretch reads KGKKKVVTKKKK.

It belongs to the bacterial ribosomal protein bL31 family. Type B subfamily. Part of the 50S ribosomal subunit.

This is Large ribosomal subunit protein bL31B from Chlamydia pneumoniae (Chlamydophila pneumoniae).